We begin with the raw amino-acid sequence, 837 residues long: Translation initiation factor IF-2 (837 aa).

Residues 97–139 show a composition bias toward basic and acidic residues; that stretch reads AEEIEAEQRRELEEQRAAEEAARLKAEQEARERAEEEARRQAE. Residues 97–253 form a disordered region; sequence AEEIEAEQRR…QHGFQSPTGP (157 aa). Residues 140–175 show a composition bias toward low complexity; it reads AAKAQTAETAAPAAAESASSAEPAQVVAAVEAAAPA. A compositionally biased stretch (basic and acidic residues) spans 176–197; it reads PERKKEEPRRVEKPRSDDDERR. The span at 198–208 shows a compositional bias: basic residues; the sequence is DRKHAQHRPSL. Basic and acidic residues predominate over residues 219–229; that stretch reads RSGEDEADGFR. Basic residues predominate over residues 230-244; the sequence is RGGRGGKSKLKKRNQ. The region spanning 337-504 is the tr-type G domain; the sequence is ARAPVVTVMG…AVLLQAEILE (168 aa). The G1 stretch occupies residues 346-353; the sequence is GHVDHGKT. A GTP-binding site is contributed by 346 to 353; sequence GHVDHGKT. Residues 371-375 form a G2 region; that stretch reads GITQH. Residues 392–395 form a G3 region; the sequence is DTPG. GTP-binding positions include 392 to 396 and 446 to 449; these read DTPGH and NKID. The tract at residues 446–449 is G4; sequence NKID. The tract at residues 482–484 is G5; that stretch reads SAK.

The protein belongs to the TRAFAC class translation factor GTPase superfamily. Classic translation factor GTPase family. IF-2 subfamily.

The protein resides in the cytoplasm. One of the essential components for the initiation of protein synthesis. Protects formylmethionyl-tRNA from spontaneous hydrolysis and promotes its binding to the 30S ribosomal subunits. Also involved in the hydrolysis of GTP during the formation of the 70S ribosomal complex. The protein is Translation initiation factor IF-2 of Stutzerimonas stutzeri (strain A1501) (Pseudomonas stutzeri).